Reading from the N-terminus, the 306-residue chain is Lipoyl synthase (306 aa).

7 residues coordinate [4Fe-4S] cluster: Cys52, Cys57, Cys63, Cys78, Cys82, Cys85, and Ser289. A Radical SAM core domain is found at 64–278 (WNRKTATYML…KETAYKIGFK (215 aa)).

It belongs to the radical SAM superfamily. Lipoyl synthase family. The cofactor is [4Fe-4S] cluster.

The protein resides in the cytoplasm. The catalysed reaction is [[Fe-S] cluster scaffold protein carrying a second [4Fe-4S](2+) cluster] + N(6)-octanoyl-L-lysyl-[protein] + 2 oxidized [2Fe-2S]-[ferredoxin] + 2 S-adenosyl-L-methionine + 4 H(+) = [[Fe-S] cluster scaffold protein] + N(6)-[(R)-dihydrolipoyl]-L-lysyl-[protein] + 4 Fe(3+) + 2 hydrogen sulfide + 2 5'-deoxyadenosine + 2 L-methionine + 2 reduced [2Fe-2S]-[ferredoxin]. Its pathway is protein modification; protein lipoylation via endogenous pathway; protein N(6)-(lipoyl)lysine from octanoyl-[acyl-carrier-protein]: step 2/2. Its function is as follows. Catalyzes the radical-mediated insertion of two sulfur atoms into the C-6 and C-8 positions of the octanoyl moiety bound to the lipoyl domains of lipoate-dependent enzymes, thereby converting the octanoylated domains into lipoylated derivatives. This chain is Lipoyl synthase, found in Leptospira biflexa serovar Patoc (strain Patoc 1 / Ames).